Here is a 457-residue protein sequence, read N- to C-terminus: Succinate-semialdehyde dehydrogenase [NADP(+)] (457 aa).

Residues 133 to 134 (WN), 157 to 160 (KHAS), and 209 to 210 (GS) contribute to the NADP(+) site. The active-site Proton acceptor is the Glu231. NADP(+) is bound at residue Leu232. The active-site Nucleophile is Cys265. Glu362 is an NADP(+) binding site.

This sequence belongs to the aldehyde dehydrogenase family.

The catalysed reaction is succinate semialdehyde + NADP(+) + H2O = succinate + NADPH + 2 H(+). Its function is as follows. Catalyzes the NADP(+)-dependent oxidation of succinate semialdehyde to succinate. It is believed to be the main source of succinate semialdehyde dehydrogenase activity in Mycobacterium. The polypeptide is Succinate-semialdehyde dehydrogenase [NADP(+)] (gabD1) (Mycobacterium leprae (strain TN)).